Here is a 173-residue protein sequence, read N- to C-terminus: Glutamyl-tRNA(Gln) amidotransferase subunit C-1, mitochondrial (173 aa).

The transit peptide at 1 to 23 (MIRIPFRLRPPPGRTLHSLVRTF) directs the protein to the mitochondrion. Residues 51–70 (PSKVPQRPHKSTTTVGQSTP) form a disordered region. Residues 61 to 70 (STTTVGQSTP) are compositionally biased toward polar residues.

This sequence belongs to the GatC family. Subunit of the heterotrimeric GatCAB amidotransferase (AdT) complex, composed of A, B and C subunits.

It localises to the mitochondrion. The enzyme catalyses L-glutamyl-tRNA(Gln) + L-glutamine + ATP + H2O = L-glutaminyl-tRNA(Gln) + L-glutamate + ADP + phosphate + H(+). Allows the formation of correctly charged Gln-tRNA(Gln) through the transamidation of misacylated Glu-tRNA(Gln) in the mitochondria. The reaction takes place in the presence of glutamine and ATP through an activated gamma-phospho-Glu-tRNA(Gln). The sequence is that of Glutamyl-tRNA(Gln) amidotransferase subunit C-1, mitochondrial from Culex quinquefasciatus (Southern house mosquito).